The following is a 120-amino-acid chain: Large ribosomal subunit protein P3y (120 aa).

Residues 81–92 are compositionally biased toward gly residues; it reads GGAAAGGGGGGE. The interval 81–120 is disordered; it reads GGAAAGGGGGGEAAAATKEEEKKKEESEEEEGDFGFDLFG. Residues 97–106 are compositionally biased toward basic and acidic residues; sequence TKEEEKKKEE.

It belongs to the eukaryotic ribosomal protein P1/P2 family.

Its function is as follows. Plays an important role in the elongation step of protein synthesis. This Arabidopsis thaliana (Mouse-ear cress) protein is Large ribosomal subunit protein P3y (RPP3B).